The chain runs to 223 residues: Dephospho-CoA kinase (223 aa).

The DPCK domain maps to 3-204; sequence VFGLSGGAGS…AGRHRFRVAR (202 aa). An ATP-binding site is contributed by 11-16; it reads GSGKST.

The protein belongs to the CoaE family.

It is found in the cytoplasm. It catalyses the reaction 3'-dephospho-CoA + ATP = ADP + CoA + H(+). It participates in cofactor biosynthesis; coenzyme A biosynthesis; CoA from (R)-pantothenate: step 5/5. Catalyzes the phosphorylation of the 3'-hydroxyl group of dephosphocoenzyme A to form coenzyme A. The protein is Dephospho-CoA kinase of Anaplasma marginale (strain St. Maries).